The following is an 839-amino-acid chain: Autophagy-related protein 9A (839 aa).

The disordered stretch occupies residues 1–21 (MAQFDTEYQRLEASYSDSPPG). N-acetylalanine is present on Ala-2. The Cytoplasmic segment spans residues 2–61 (AQFDTEYQRLEASYSDSPPGEEDLLVHVPEGSKSPWHHIENLDLFFSRVYNLHQKNGFTC). Positions 8 to 11 (YQRL) match the Tyrosine-based sorting signal motif. Residues Ser-14, Ser-16, and Ser-18 each carry the phosphoserine modification. The chain crosses the membrane as a helical span at residues 62 to 84 (MLIGEIFELMQFLFVVAFTTFLV). The Lumenal segment spans residues 85 to 128 (SCVDYDILFANKMVNHSLHPTEPVKVTLPDAFLPAQVCSARIQE). A glycan (N-linked (GlcNAc...) asparagine) is linked at Asn-99. A helical transmembrane segment spans residues 129–154 (NGSLITILVIAGVFWVHRLIKFIYNI). The Cytoplasmic segment spans residues 155 to 290 (CCYWEIHSFY…ELAQRLSNRI (136 aa)). The stretch at 291–301 (LWIGIANFLLC) is an intramembrane region. Over 302–319 (PLILIWQILYAFFSYAEV) the chain is Cytoplasmic. The stretch at 320 to 328 (LKREPGALG) is an intramembrane region. The Cytoplasmic portion of the chain corresponds to 329–371 (ARCWSLYGRCYLRHFNELEHELQSRLNRGYKPASKYMNCFLSP). A helical membrane pass occupies residues 372–397 (LLTLLAKNCAFFAGSILAVLIALTIY). Residues 398–406 (DEDVLAVEH) lie on the Lumenal side of the membrane. Residues 407–424 (VLTTVTLLGVTVTVCRSF) form a helical membrane-spanning segment. Residues 425 to 470 (IPDQHMVFCPEQLLRVILAHIHYMPDHWQGNAHRSQTRDEFAQLFQ) lie on the Cytoplasmic side of the membrane. Residues 471-480 (YKAVFILEEL) lie within the membrane without spanning it. Topologically, residues 481-483 (LSP) are cytoplasmic. An intramembrane segment occupies 484 to 492 (IVTPLILIF). Topologically, residues 493-839 (CLRPRALEII…DELPPQVHKV (347 aa)) are cytoplasmic. Residues Ser-656, Ser-735, Ser-738, Ser-741, and Ser-828 each carry the phosphoserine modification. 2 disordered regions span residues 656–688 (SPLQ…GSSV) and 719–839 (QQAQ…VHKV). A compositionally biased stretch (basic and acidic residues) spans 724–736 (EPERHVWHRRESD). Acidic residues-rich tracts occupy residues 737 to 747 (ESGESAPEEGG) and 823 to 832 (VPEEGSEDEL).

The protein belongs to the ATG9 family. Homotrimer; forms a homotrimer with a central pore that forms a path between the two membrane leaflets. Interacts (via cytoplasmic its C-terminus) with ATG2A. Interacts with SUPT20H. Interacts (via the tyrosine-based sorting signal motif) with AP4M1; promoting association with the AP-4 complex. Interacts with ARFIP1 and ARFIP2. Interacts with PI4K2A and PI4KB. Interacts with ATG4A; the interaction is direct and promotes ATG9A trafficking. Post-translationally, ufmylated in a DDRGK1 dependent manner.

It is found in the preautophagosomal structure membrane. The protein localises to the cytoplasmic vesicle. It localises to the autophagosome membrane. Its subcellular location is the golgi apparatus. The protein resides in the trans-Golgi network membrane. It is found in the late endosome membrane. The protein localises to the recycling endosome membrane. It localises to the endoplasmic reticulum membrane. Its subcellular location is the mitochondrion membrane. It catalyses the reaction a 1,2-diacyl-sn-glycero-3-phosphocholine(in) = a 1,2-diacyl-sn-glycero-3-phosphocholine(out). The enzyme catalyses a 1,2-diacyl-sn-glycero-3-phospho-L-serine(in) = a 1,2-diacyl-sn-glycero-3-phospho-L-serine(out). The catalysed reaction is a 1,2-diacyl-sn-glycero-3-phosphoethanolamine(in) = a 1,2-diacyl-sn-glycero-3-phosphoethanolamine(out). Its function is as follows. Phospholipid scramblase involved in autophagy by mediating autophagosomal membrane expansion. Cycles between the preautophagosomal structure/phagophore assembly site (PAS) and the cytoplasmic vesicle pool and supplies membrane for the growing autophagosome. Lipid scramblase activity plays a key role in preautophagosomal structure/phagophore assembly by distributing the phospholipids that arrive through ATG2 (ATG2A or ATG2B) from the cytoplasmic to the luminal leaflet of the bilayer, thereby driving autophagosomal membrane expansion. Also required to supply phosphatidylinositol 4-phosphate to the autophagosome initiation site by recruiting the phosphatidylinositol 4-kinase beta (PI4KB) in a process dependent on ARFIP2, but not ARFIP1. In addition to autophagy, also plays a role in necrotic cell death. The polypeptide is Autophagy-related protein 9A (Bos taurus (Bovine)).